The sequence spans 514 residues: Peptide chain release factor 3 (514 aa).

The 261-residue stretch at 8–268 (KKRRTFAIIS…SFLAFAPEPH (261 aa)) folds into the tr-type G domain. GTP is bound by residues 17–24 (SHPDAGKT), 85–89 (DTPGH), and 139–142 (NKLD).

This sequence belongs to the TRAFAC class translation factor GTPase superfamily. Classic translation factor GTPase family. PrfC subfamily.

The protein localises to the cytoplasm. In terms of biological role, increases the formation of ribosomal termination complexes and stimulates activities of RF-1 and RF-2. It binds guanine nucleotides and has strong preference for UGA stop codons. It may interact directly with the ribosome. The stimulation of RF-1 and RF-2 is significantly reduced by GTP and GDP, but not by GMP. In Streptococcus mutans serotype c (strain ATCC 700610 / UA159), this protein is Peptide chain release factor 3.